The sequence spans 488 residues: Patatin-like protein 7 (488 aa).

A disordered region spans residues 23-49 (QRGGDGATAASKSANDYNNNDSLLTDM). Residues 32–47 (ASKSANDYNNNDSLLT) show a composition bias toward polar residues. Residues 101-301 (LSIDGGGMRG…AMSNPTAAAI (201 aa)) enclose the PNPLA domain. A GXGXXG motif is present at residues 105 to 110 (GGGMRG). Ser145 functions as the Nucleophile in the catalytic mechanism.

This sequence belongs to the patatin family. As to expression, highly expressed in roots and at lower levels in leaves, stems, flowers and siliques.

The protein localises to the cell membrane. Possesses non-specific lipolytic acyl hydrolase (LAH) activity. Catalyzes the hydrolysis of the galactolipids monogalactosyldiacylglycerol (MGDG) and digalactosyldiacylglycerol (DGDG), and the phoshpolipids phosphatidylcholine (PC), phosphatidylethanolamine (PE), phosphatidylglycerol (PG), phosphatidic acid (PA), phosphatidylserine (PS). Favors the release of fatty acid at the sn-2 position for PC. Possesses acyl-CoA thioesterase activity. Negatively affects disease resistance to the necrotic fungal pathogen Botrytis cinerea and the avirulent bacteria Pseudomonas syringae by promoting cell death and reducing the efficiency of the hypersensitive response, respectively. However, PLP2 contributes to resistance to cucumber mosaic virus (CMV), an obligate parasite inducing hypersensitive response. May negatively regulate oxylipin production, possibly via participating in membrane repair that includes removal of oxidatively modified lipids. Enzymatic products of PLP2 may influence cellulose content and cell elongation. This is Patatin-like protein 7 (PLP7) from Arabidopsis thaliana (Mouse-ear cress).